The primary structure comprises 311 residues: Dihydroorotate dehydrogenase B (NAD(+)), catalytic subunit (311 aa).

Residues serine 24 and lysine 48–alanine 49 each bind FMN. Substrate contacts are provided by residues lysine 48 and asparagine 72 to leucine 76. Asparagine 104 and asparagine 132 together coordinate FMN. Substrate is bound at residue asparagine 132. The active-site Nucleophile is the cysteine 135. FMN is bound by residues lysine 170 and isoleucine 196. Asparagine 197–threonine 198 contacts substrate. Residues glycine 222, glycine 248–glycine 249, and glycine 270–threonine 271 each bind FMN.

This sequence belongs to the dihydroorotate dehydrogenase family. Type 1 subfamily. Heterotetramer of 2 PyrK and 2 PyrD type B subunits. FMN serves as cofactor.

The protein localises to the cytoplasm. The enzyme catalyses (S)-dihydroorotate + NAD(+) = orotate + NADH + H(+). Its pathway is pyrimidine metabolism; UMP biosynthesis via de novo pathway; orotate from (S)-dihydroorotate (NAD(+) route): step 1/1. Functionally, catalyzes the conversion of dihydroorotate to orotate with NAD(+) as electron acceptor. The polypeptide is Dihydroorotate dehydrogenase B (NAD(+)), catalytic subunit (pyrDB) (Lactococcus lactis subsp. lactis (strain IL1403) (Streptococcus lactis)).